We begin with the raw amino-acid sequence, 474 residues long: Mercuric reductase (474 aa).

A19, G39, and T44 together coordinate FAD. A disulfide bridge connects residues C45 and C50. FAD contacts are provided by K54, A119, D315, and V323. Hg(2+)-binding residues include C471 and C472.

This sequence belongs to the class-I pyridine nucleotide-disulfide oxidoreductase family. Homodimer. The cofactor is FAD.

The catalysed reaction is Hg + NADP(+) + H(+) = Hg(2+) + NADPH. In terms of biological role, resistance to Hg(2+) in bacteria appears to be governed by a specialized system which includes mercuric reductase. MerA protein is responsible for volatilizing mercury as Hg(0). The chain is Mercuric reductase (merA) from Streptomyces lividans.